A 354-amino-acid chain; its full sequence is Petrobactin import system permease protein FatC (354 aa).

The next 9 membrane-spanning stretches (helical) occupy residues 37-57 (YWIV…GLLV), 77-97 (IVAI…TVAF), 116-136 (LYSA…LINF), 141-161 (SFLF…GWLL), 168-188 (LQLM…VSTF), 214-234 (PAYF…IFAH), 259-279 (VIYT…LIGP), 302-322 (YIFP…YFLM), and 329-349 (QGVV…TIVL).

Belongs to the binding-protein-dependent transport system permease family. FecCD subfamily. The complex is composed of two ATP-binding proteins (FatE), two transmembrane proteins (FatC and FatD) and a solute-binding protein (FpuA).

Its subcellular location is the cell membrane. Its function is as follows. Part of an ABC transporter complex involved in ferric-petrobactin uptake. Probably responsible for the translocation of the substrate across the membrane. This chain is Petrobactin import system permease protein FatC, found in Bacillus anthracis.